A 284-amino-acid polypeptide reads, in one-letter code: Pantothenate synthetase (284 aa).

Position 30–37 (30–37 (MGFLHEGH)) interacts with ATP. Residue H37 is the Proton donor of the active site. Q61 contributes to the (R)-pantoate binding site. Q61 is a binding site for beta-alanine. 147 to 150 (GRKD) is an ATP binding site. Q153 is a (R)-pantoate binding site. Residues V176 and 184–187 (MSSR) each bind ATP.

This sequence belongs to the pantothenate synthetase family. Homodimer.

Its subcellular location is the cytoplasm. It carries out the reaction (R)-pantoate + beta-alanine + ATP = (R)-pantothenate + AMP + diphosphate + H(+). The protein operates within cofactor biosynthesis; (R)-pantothenate biosynthesis; (R)-pantothenate from (R)-pantoate and beta-alanine: step 1/1. Catalyzes the condensation of pantoate with beta-alanine in an ATP-dependent reaction via a pantoyl-adenylate intermediate. The chain is Pantothenate synthetase from Pelobacter propionicus (strain DSM 2379 / NBRC 103807 / OttBd1).